A 99-amino-acid chain; its full sequence is Cell cycle protein GpsB (99 aa).

The stretch at 34–71 forms a coiled coil; that stretch reads LDMIIKDYETFHQEIEELQQENLQLKKQLEEASKKQPV.

The protein belongs to the GpsB family. As to quaternary structure, forms polymers through the coiled coil domains. Interacts with PBP1, MreC and EzrA.

Its subcellular location is the cytoplasm. Divisome component that associates with the complex late in its assembly, after the Z-ring is formed, and is dependent on DivIC and PBP2B for its recruitment to the divisome. Together with EzrA, is a key component of the system that regulates PBP1 localization during cell cycle progression. Its main role could be the removal of PBP1 from the cell pole after pole maturation is completed. Also contributes to the recruitment of PBP1 to the division complex. Not essential for septum formation. This chain is Cell cycle protein GpsB, found in Bacillus velezensis (strain DSM 23117 / BGSC 10A6 / LMG 26770 / FZB42) (Bacillus amyloliquefaciens subsp. plantarum).